The primary structure comprises 120 residues: MSASAGGSHQPSQSRAIPTRTVAISDAAQLPQDYCTTPGGTLFSTTPGGTRIIYDRKFLLDRRNSPMAQTPPCHLPNIPGVTSPGALIEDSKVEVNNLNNLNNHDRKHAVGDEAQFEMDI.

Residues T37 and T46 each carry the phosphothreonine; by MTOR modification. The YXXXXLphi motif signature appears at 54–60 (YDRKFLL). S65 bears the Phosphoserine; by MTOR mark. T70 is subject to Phosphothreonine; by MTOR. S83 carries the phosphoserine modification. Deamidated asparagine is present on residues N99 and N102. The TOS motif motif lies at 116–120 (FEMDI).

This sequence belongs to the eIF4E-binding protein family. Hypophosphorylated EIF4EBP2 interacts with EIF4E; phosphorylation of EIF4EBP2 by mTORC1 causes dissociation of the complex allowing EIF4G1/EIF4G3 to bind and consequent initiation of translation. Interacts (via TOS motif) with RPTOR; promoting phosphorylation by mTORC1. Interacts with PCMT1; required to prevent isoaspartate accumulation and convert isoaspartate to Asp. In terms of processing, phosphorylation at Thr-37, Thr-46, Ser-65, Thr-70 and Ser-83 is mediated by MTOR and corresponds to the hyperphosphorylated form: it abolishes binding to EIF4E by inducing folding of intrinsically disordered regions. First phosphorylated at Thr-37 and Thr-46 by MTOR, inducing folding of region encompassing residues from Pro-18 to Arg-62 of into a four-stranded beta-domain that sequesters the helical YXXXXLPhi motif into a partly buried beta-strand, blocking accessibility to EIF4E. Protein phosphorylated at Thr-37 and Thr-46 is however unstable and subsequent phosphorylation at Ser-65, Thr-70 and Ser-83 is required to stabilize the fold, decreasing affinity for EIF4E by a factor of 4000. Phosphorylated in response to insulin, EGF and PDGF. Deamidated at Asn-99 and Asn-102 to aspartate (Asp) in brain. Deamidation promotes interaction with RPTOR, subsequent phosphorylation by mTORC1 and increased translation, leading to impair kinetics of excitatory synaptic transmission. Deamidation takes place during postnatal development, when the PI3K-Akt-mTOR signaling is reduced, suggesting it acts as a compensatory mechanism to promote translation despite attenuated PI3K-Akt-mTOR signaling in neuron development. Deamidation converts Asn residues into a mixture of Asp and isoaspartate; interactions with PCMT1 is required to prevent isoaspartate accumulation and convert isoaspartate to Asp. In terms of tissue distribution, enriched in brain.

It is found in the cytoplasm. The protein localises to the nucleus. Its function is as follows. Repressor of translation initiation involved in synaptic plasticity, learning and memory formation. Regulates EIF4E activity by preventing its assembly into the eIF4F complex: hypophosphorylated form of EIF4EBP2 competes with EIF4G1/EIF4G3 and strongly binds to EIF4E, leading to repress translation. In contrast, hyperphosphorylated form dissociates from EIF4E, allowing interaction between EIF4G1/EIF4G3 and EIF4E, leading to initiation of translation. EIF4EBP2 is enriched in brain and acts as a regulator of synapse activity and neuronal stem cell renewal via its ability to repress translation initiation. Mediates the regulation of protein translation by hormones, growth factors and other stimuli that signal through the MAP kinase and mTORC1 pathways. This is Eukaryotic translation initiation factor 4E-binding protein 2 from Mus musculus (Mouse).